The primary structure comprises 238 residues: Probable RNA/DNA demethylase ALKBH6 (238 aa).

The 132-residue stretch at Pro-96–Pro-227 folds into the Fe2OG dioxygenase domain. Residues Asn-103 and Tyr-105 each contribute to the 2-oxoglutarate site. Fe cation-binding residues include His-114 and Asp-116. Residues Tyr-138–Ser-161 are disordered. Fe cation is bound at residue His-182. Arg-218 and Ser-220 together coordinate 2-oxoglutarate.

It belongs to the alkB family. In terms of assembly, interacts with VCPKMT. The cofactor is Fe(2+). Widely expressed, with highest expression in testis and pancreas.

Its subcellular location is the cytoplasm. The protein localises to the nucleus. Probable Fe(2+)/2-oxoglutarate-dependent dioxygenase involved in oxidative demethylation of nucleic acids. Binds nucleic acids with a preference for ssDNA or ssRNA to other types of DNAs. May play a role in nucleic acid damage repair. The protein is Probable RNA/DNA demethylase ALKBH6 of Homo sapiens (Human).